The chain runs to 55 residues: Large ribosomal subunit protein bL33 (55 aa).

It belongs to the bacterial ribosomal protein bL33 family.

This Campylobacter fetus subsp. fetus (strain 82-40) protein is Large ribosomal subunit protein bL33.